The sequence spans 444 residues: ATP-dependent protease ATPase subunit HslU (444 aa).

ATP contacts are provided by residues isoleucine 18 and 60 to 65; that span reads GVGKTE. Residues 143–163 are disordered; the sequence is WGEVENHDSHSSTRQAFRKKL. The ATP site is built by aspartate 257, glutamate 322, and arginine 394.

This sequence belongs to the ClpX chaperone family. HslU subfamily. In terms of assembly, a double ring-shaped homohexamer of HslV is capped on each side by a ring-shaped HslU homohexamer. The assembly of the HslU/HslV complex is dependent on binding of ATP.

Its subcellular location is the cytoplasm. ATPase subunit of a proteasome-like degradation complex; this subunit has chaperone activity. The binding of ATP and its subsequent hydrolysis by HslU are essential for unfolding of protein substrates subsequently hydrolyzed by HslV. HslU recognizes the N-terminal part of its protein substrates and unfolds these before they are guided to HslV for hydrolysis. The polypeptide is ATP-dependent protease ATPase subunit HslU (Haemophilus influenzae (strain 86-028NP)).